The following is a 280-amino-acid chain: UPF0276 protein NMA0228 (280 aa).

This sequence belongs to the UPF0276 family.

The polypeptide is UPF0276 protein NMA0228 (Neisseria meningitidis serogroup A / serotype 4A (strain DSM 15465 / Z2491)).